The primary structure comprises 147 residues: Hemoglobin subunit beta (147 aa).

Position 2 is an N-acetylvaline (V2). The Globin domain maps to 3–147; sequence HLADDEKAAV…VSTALAHKYH (145 aa). S45 is modified (phosphoserine). N6-acetyllysine is present on K60. H64 lines the heme b pocket. An N6-acetyllysine modification is found at K83. Residue H93 coordinates heme b. C94 carries the post-translational modification S-nitrosocysteine. An N6-acetyllysine modification is found at K145.

It belongs to the globin family. In terms of assembly, heterotetramer of two alpha chains and two beta chains. Red blood cells.

Involved in oxygen transport from the lung to the various peripheral tissues. The protein is Hemoglobin subunit beta (HBB) of Bradypus tridactylus (Pale-throated three-toed sloth).